The chain runs to 236 residues: Enolase-phosphatase E1 (236 aa).

It belongs to the HAD-like hydrolase superfamily. MasA/MtnC family. In terms of assembly, monomer. Mg(2+) is required as a cofactor.

The enzyme catalyses 5-methylsulfanyl-2,3-dioxopentyl phosphate + H2O = 1,2-dihydroxy-5-(methylsulfanyl)pent-1-en-3-one + phosphate. Its pathway is amino-acid biosynthesis; L-methionine biosynthesis via salvage pathway; L-methionine from S-methyl-5-thio-alpha-D-ribose 1-phosphate: step 3/6. It functions in the pathway amino-acid biosynthesis; L-methionine biosynthesis via salvage pathway; L-methionine from S-methyl-5-thio-alpha-D-ribose 1-phosphate: step 4/6. Bifunctional enzyme that catalyzes the enolization of 2,3-diketo-5-methylthiopentyl-1-phosphate (DK-MTP-1-P) into the intermediate 2-hydroxy-3-keto-5-methylthiopentenyl-1-phosphate (HK-MTPenyl-1-P), which is then dephosphorylated to form the acireductone 1,2-dihydroxy-3-keto-5-methylthiopentene (DHK-MTPene). The protein is Enolase-phosphatase E1 of Frankia alni (strain DSM 45986 / CECT 9034 / ACN14a).